The following is a 345-amino-acid chain: MLRPAGLWRLCRRPWAARVPAENLGRREVTSGVSPRGSTSPRTLNIFDRDLKRKQKNWAARQPEPTKFDYLKEEVGSRIADRVYDIPRNFPLALDLGCGRGYIAQYLNKETIGKFFQADIAENALKNSSETEIPTVSVLADEEFLPFKENTFDLVVSSLSLHWVNDLPRALEQIHYILKPDGVFIGAMFGGDTLYELRCSLQLAETEREGGFSPHISPFTAVNDLGHLLGRAGFNTLTVDTDEIQVNYPGMFELMEDLQGMGESNCAWNRKALLHRDTMLAAAAVYREMYRNEDGSVPATYQIYYMIGWKYHESQARPAERGSATVSFGELGKINNLMPPGKKSQ.

A mitochondrion-targeting transit peptide spans 1–36 (MLRPAGLWRLCRRPWAARVPAENLGRREVTSGVSPR).

This sequence belongs to the methyltransferase superfamily. In terms of assembly, interacts with NDUFAF8, leading to stabilize NDUFAF5. Interacts with NDUFS7. Interacts with PYURF (via TRM112 domain); the interaction is direct and stabilizes NDUFAF5 protein.

It is found in the mitochondrion inner membrane. Functionally, arginine hydroxylase that mediates hydroxylation of 'Arg-111' of NDUFS7 and is involved in the assembly of mitochondrial NADH:ubiquinone oxidoreductase complex (complex I, MT-ND1) at early stages. May also have methyltransferase activity. The sequence is that of Arginine-hydroxylase NDUFAF5, mitochondrial from Homo sapiens (Human).